Here is an 804-residue protein sequence, read N- to C-terminus: DNA mismatch repair protein MutS (804 aa).

614–621 (GPNMAGKS) is a binding site for ATP.

This sequence belongs to the DNA mismatch repair MutS family.

In terms of biological role, this protein is involved in the repair of mismatches in DNA. It is possible that it carries out the mismatch recognition step. This protein has a weak ATPase activity. In Ehrlichia ruminantium (strain Welgevonden), this protein is DNA mismatch repair protein MutS.